The sequence spans 408 residues: Broad specificity amino-acid racemase (408 aa).

Positions 1 to 24 (MNFKKTLLSIAIASASLTPAFSYS) are cleaved as a signal peptide. Cys-71 and Cys-97 are disulfide-bonded. Residue Lys-75 is the Proton acceptor of the active site. Lys-75 is subject to N6-(pyridoxal phosphate)lysine. Residue Arg-174 coordinates substrate. The active-site Proton acceptor is Tyr-300. Position 348 (Met-348) interacts with substrate.

Belongs to the alanine racemase family. Bsr subfamily. It depends on pyridoxal 5'-phosphate as a cofactor.

The protein localises to the periplasm. It catalyses the reaction an L-alpha-amino acid = a D-alpha-amino acid. The catalysed reaction is L-lysine = D-lysine. It carries out the reaction L-arginine = D-arginine. Its function is as follows. Amino-acid racemase able to utilize a broad range of substrates. The polypeptide is Broad specificity amino-acid racemase (alr) (Vibrio vulnificus (strain CMCP6)).